A 261-amino-acid polypeptide reads, in one-letter code: 4-phosphopantoate--beta-alanine ligase (261 aa).

ATP-binding positions include Arg-17, Arg-39, 181-182, 187-188, and 199-200; these read DL, RS, and NI.

Belongs to the archaeal phosphopantothenate synthetase family. In terms of assembly, homodimer.

It catalyses the reaction (R)-4-phosphopantoate + beta-alanine + ATP = (R)-4'-phosphopantothenate + AMP + diphosphate + H(+). Its pathway is cofactor biosynthesis; coenzyme A biosynthesis. In terms of biological role, catalyzes the condensation of (R)-4-phosphopantoate and beta-alanine to 4'-phosphopantothenate in the CoA biosynthesis pathway. The protein is 4-phosphopantoate--beta-alanine ligase of Thermococcus onnurineus (strain NA1).